The following is a 305-amino-acid chain: Acyl transferase (305 aa).

Active-site charge relay system residues include Ser-114, Asp-211, and His-241.

It belongs to the LuxD family.

It participates in lipid metabolism; fatty acid reduction for biolumincescence. In terms of biological role, acyl transferase is part of the fatty acid reductase system required for aldehyde biosynthesis; it produces fatty acids for the luminescent reaction. The polypeptide is Acyl transferase (luxD) (Vibrio harveyi (Beneckea harveyi)).